Consider the following 186-residue polypeptide: ATP synthase subunit delta (186 aa).

Belongs to the ATPase delta chain family. F-type ATPases have 2 components, F(1) - the catalytic core - and F(0) - the membrane proton channel. F(1) has five subunits: alpha(3), beta(3), gamma(1), delta(1), epsilon(1). F(0) has three main subunits: a(1), b(2) and c(10-14). The alpha and beta chains form an alternating ring which encloses part of the gamma chain. F(1) is attached to F(0) by a central stalk formed by the gamma and epsilon chains, while a peripheral stalk is formed by the delta and b chains.

The protein localises to the cell inner membrane. In terms of biological role, f(1)F(0) ATP synthase produces ATP from ADP in the presence of a proton or sodium gradient. F-type ATPases consist of two structural domains, F(1) containing the extramembraneous catalytic core and F(0) containing the membrane proton channel, linked together by a central stalk and a peripheral stalk. During catalysis, ATP synthesis in the catalytic domain of F(1) is coupled via a rotary mechanism of the central stalk subunits to proton translocation. This protein is part of the stalk that links CF(0) to CF(1). It either transmits conformational changes from CF(0) to CF(1) or is implicated in proton conduction. In Ruegeria sp. (strain TM1040) (Silicibacter sp.), this protein is ATP synthase subunit delta.